Here is a 421-residue protein sequence, read N- to C-terminus: UPF0415 protein C7orf25 homolog (421 aa).

Belongs to the UPF0415 family.

This is UPF0415 protein C7orf25 homolog from Rattus norvegicus (Rat).